We begin with the raw amino-acid sequence, 139 residues long: UDP-glucose 4-epimerase (139 aa).

NAD(+) is bound by residues 11 to 12 (YI), 31 to 36 (DNLCNS), 58 to 59 (DI), 80 to 84 (FAGLK), Asn-99, and Ser-124. Ser-124 is a binding site for substrate. Tyr-136 functions as the Proton acceptor in the catalytic mechanism.

Belongs to the NAD(P)-dependent epimerase/dehydratase family. Homodimer. Requires NAD(+) as cofactor.

The catalysed reaction is UDP-alpha-D-glucose = UDP-alpha-D-galactose. It functions in the pathway carbohydrate metabolism; galactose metabolism. Functionally, involved in the metabolism of galactose. Catalyzes the conversion of UDP-galactose (UDP-Gal) to UDP-glucose (UDP-Glc) through a mechanism involving the transient reduction of NAD. This chain is UDP-glucose 4-epimerase (galE), found in Klebsiella pneumoniae.